The following is a 72-amino-acid chain: DNA-directed RNA polymerase subunit omega (72 aa).

It belongs to the RNA polymerase subunit omega family. The RNAP catalytic core consists of 2 alpha, 1 beta, 1 beta' and 1 omega subunit. When a sigma factor is associated with the core the holoenzyme is formed, which can initiate transcription.

It carries out the reaction RNA(n) + a ribonucleoside 5'-triphosphate = RNA(n+1) + diphosphate. In terms of biological role, promotes RNA polymerase assembly. Latches the N- and C-terminal regions of the beta' subunit thereby facilitating its interaction with the beta and alpha subunits. The chain is DNA-directed RNA polymerase subunit omega from Lactobacillus johnsonii (strain CNCM I-12250 / La1 / NCC 533).